A 407-amino-acid chain; its full sequence is MTTFSEKEKIQLLADIVELQTENNNEIDVCNYLKDLFDKYDIKSEILKVNEHRANIVAEIGNGSPILALSGHMDVVDAGNQDNWTYPPFQLTEKAGKLYGRGTTDMKGGLMALVITLIELKEQNQLPQGTIRLLATAGEEKEQEGAKLLADKGYLDDVDGLIIAEPTGSGIYYAHKGSMSCKVTATGKAVHSSVPFIGDNAIDTLLEFYNLFKEKYSELKQQDTKHELDVAPMFKSLIGKEISEEDANYASGLTAVCSIINGGKQFNSVPDEASLEFNVRPVPEYDNDFIESFFQNIINDVDSNKLSLDIPSNHRPVTSDKNSKLITTIKDVASSYVEQDEIFVSALVGATDASSFLGDNKDNVDLAIFGPGNPLMAHQIDEYIEKDMYLKYIDIFKEASIKYLKEK.

His72 is a binding site for Zn(2+). Residue Asp74 is part of the active site. Asp105 contributes to the Zn(2+) binding site. Glu139 functions as the Proton acceptor in the catalytic mechanism. Zn(2+) is bound by residues Glu140, Glu165, and His378.

This sequence belongs to the peptidase M20A family. Requires Zn(2+) as cofactor. Co(2+) is required as a cofactor.

The enzyme catalyses N-succinyl-(2S,6S)-2,6-diaminopimelate + H2O = (2S,6S)-2,6-diaminopimelate + succinate. Its pathway is amino-acid biosynthesis; L-lysine biosynthesis via DAP pathway; LL-2,6-diaminopimelate from (S)-tetrahydrodipicolinate (succinylase route): step 3/3. This is Probable succinyl-diaminopimelate desuccinylase (dapE) from Staphylococcus aureus (strain MSSA476).